A 688-amino-acid polypeptide reads, in one-letter code: Glycine--tRNA ligase beta subunit (688 aa).

It belongs to the class-II aminoacyl-tRNA synthetase family. Tetramer of two alpha and two beta subunits.

Its subcellular location is the cytoplasm. The enzyme catalyses tRNA(Gly) + glycine + ATP = glycyl-tRNA(Gly) + AMP + diphosphate. This chain is Glycine--tRNA ligase beta subunit, found in Actinobacillus pleuropneumoniae serotype 7 (strain AP76).